We begin with the raw amino-acid sequence, 618 residues long: Pyocin-S1 (618 aa).

This sequence belongs to the colicin/pyosin nuclease family. Purified pyocin S1 makes up a complex of the two (large and small) proteins. The large protein, but not the pyocin complex, shows in vitro DNase activity.

Its function is as follows. Causes breakdown of chromosomal DNA as well as complete inhibition of lipid synthesis in sensitive cells. In Pseudomonas aeruginosa, this protein is Pyocin-S1 (pys1).